A 279-amino-acid chain; its full sequence is uncharacterized protein (279 aa).

Transmembrane regions (helical) follow at residues 31 to 51 (GYIA…FHAT), 67 to 87 (LLSI…AKII), and 115 to 135 (EITG…SLAL).

This sequence belongs to the transketolase family. It depends on thiamine diphosphate as a cofactor.

The protein resides in the cell membrane. This is an uncharacterized protein from Sinorhizobium fredii (strain NBRC 101917 / NGR234).